The sequence spans 382 residues: MQRLDALLPTLRERAQETEDLRRIPDDSMKALQETGFFRLLQPEQWGGYQADPVLFYSAVRKIASACGSTGWVSSIIGVHNWHLALFSQQAQEDVWGNDTDVRISSSYAPMGAGQVVDGGYTVNGAWAWSSGCDHASWAVLGGPVIKDGRPVDFVSFLIPREDYRIDDVWNVVGLRGTGSNTVVVEDVFVPTHRVLSFKAMSNLTAPGLERNTAPVYKMPWGTIHPTTISAPIVGMAYGAYDAHVEHQGKRVRAAFAGEKAKDDPFAKVRIAEASSDIDAAWRQLSGNVADEYALLVAGEEVPFELRLRARRDQVRATGRAISSIDKLFESSGATALANGTPLQRFWRDAHAGRVHAANDPERAYVMYGTGEFGLPITDTMV.

Residues tryptophan 72, 106-108, 129-131, arginine 251, 334-335, and 356-357 each bind FMN; these read SSY, WSS, AT, and HA.

The protein belongs to the HpaH/HsaA monooxygenase family. Homotetramer. HsaAB monooxygenase consists of an oxygenase component HsaA and a reductase component HsaB.

The catalysed reaction is 3-hydroxy-9,10-secoandrosta-1,3,5(10)-triene-9,17-dione + FMNH2 + O2 = 3,4-dihydroxy-9,10-secoandrosta-1,3,5(10)-triene-9,17-dione + FMN + H2O + H(+). Its pathway is lipid metabolism; steroid biosynthesis. Its function is as follows. Catalyzes the o-hydroxylation of 3-hydroxy-9,10-secoandrosta-1,3,5(10)-triene-9,17-dione (3-HSA) to 3,4-dihydroxy-9,10-secoandrosta-1,3,5(10)-triene-9,17-dione (3,4-DHSA) in the catabolism of cholesterol. The protein is Flavin-dependent monooxygenase, oxygenase subunit HsaA (hsaA) of Rhodococcus jostii (strain RHA1).